The following is a 36-amino-acid chain: Photosystem I reaction center subunit VIII (36 aa).

A helical transmembrane segment spans residues 9–29; it reads ISVPLVGLVFPAITMVLSFIY.

Belongs to the PsaI family.

Its subcellular location is the plastid. It localises to the chloroplast thylakoid membrane. In terms of biological role, may help in the organization of the PsaL subunit. The sequence is that of Photosystem I reaction center subunit VIII from Huperzia lucidula (Shining clubmoss).